The chain runs to 213 residues: Ribonuclease HII (213 aa).

The region spanning 18–213 (GLYAGVDEVG…RPVKERLAKN (196 aa)) is the RNase H type-2 domain. A divalent metal cation is bound by residues Asp-24, Glu-25, and Asp-116.

It belongs to the RNase HII family. Requires Mn(2+) as cofactor. The cofactor is Mg(2+).

The protein localises to the cytoplasm. It carries out the reaction Endonucleolytic cleavage to 5'-phosphomonoester.. Its function is as follows. Endonuclease that specifically degrades the RNA of RNA-DNA hybrids. This is Ribonuclease HII from Shewanella sediminis (strain HAW-EB3).